Here is a 230-residue protein sequence, read N- to C-terminus: Bidirectional sugar transporter SWEET16 (230 aa).

At 1-3 (MAD) the chain is on the extracellular side. Residues 4–24 (LSFYVGVIGNVISVLVFLSPV) traverse the membrane as a helical segment. The region spanning 6 to 92 (FYVGVIGNVI…LIFLFFVPKS (87 aa)) is the MtN3/slv 1 domain. The Cytoplasmic segment spans residues 25-40 (ETFWRIVQRRSTEEYE). Residues 41–61 (CFPYICTLMSSSLWTYYGIVT) traverse the membrane as a helical segment. The Extracellular segment spans residues 62–69 (PGEYLVST). The chain crosses the membrane as a helical span at residues 70–90 (VNGFGALAESIYVLIFLFFVP). Residues 91–93 (KSR) are Cytoplasmic-facing. The helical transmembrane segment at 94 to 114 (FLKTVVVVLALNVCFPVIAIA) threads the bilayer. Residues 115–128 (GTRTLFGDANSRSS) are Extracellular-facing. Residues 129–149 (SMGFICATLNIIMYGSPLSAI) form a helical membrane-spanning segment. One can recognise a MtN3/slv 2 domain in the interval 129–212 (SMGFICATLN…LLIYAYYRNA (84 aa)). The Cytoplasmic portion of the chain corresponds to 150–162 (KTVVTTRSVQFMP). The helical transmembrane segment at 163-183 (FWLSFFLFLNGAIWGVYALLL) threads the bilayer. Residues 184-185 (HD) are Extracellular-facing. A helical membrane pass occupies residues 186 to 206 (MFLLVPNGMGFFLGIMQLLIY). Topologically, residues 207 to 230 (AYYRNAEPIVEDEEGLIPNQPLLA) are cytoplasmic.

The protein belongs to the SWEET sugar transporter family. Forms homooligomers and heterooligomers with SWEET1, SWEET7, SWEET8, SWEET9 and SWEET17. Mostly expressed in the cortex of mature roots, and, to a lower extent, in aerial organs such as leaves, stems, and flowers. Mainly present in vascular parenchyma cells, especially in the petiole vasculature, flower stalks and at the base of individual, not fully developed flowers.

It is found in the vacuole membrane. Mediates both low-affinity uptake and efflux of sugar across the vacuolar membrane. Regulates sugars homeostasis in leaves and roots by exporting/importing them through the tonoplast regarding metabolic demand. Acts as a vacuolar hexose transporter, such as glucose (Glc), fructose (Fru), and sucrose (Suc). The chain is Bidirectional sugar transporter SWEET16 from Arabidopsis thaliana (Mouse-ear cress).